The chain runs to 375 residues: Phosphoglucan phosphatase DSP4, amyloplastic (375 aa).

An amyloplast-targeting transit peptide spans 1–42 (MFCVQNLPRSSALPLQSFKSHQRRPPCSVNTLGVMSNVNLHR). The interval 49 to 71 (ISGPTSSAETSDANVEEEKSETY) is disordered. Residues 51 to 61 (GPTSSAETSDA) show a composition bias toward polar residues. The Tyrosine-protein phosphatase domain occupies 92-249 (NYNFIRPDLI…AADILTGLRK (158 aa)). The active-site Phosphocysteine intermediate is cysteine 193. 194-199 (TAGLGR) serves as a coordination point for substrate. Positions 254–330 (LTWKNPDCTT…NKDGHVNNFV (77 aa)) are polysaccharide binding.

As to expression, expressed in phloem parenchyma of 16-24 week old seedlings and 2 year old trees (at protein level). Expressed in leaves of 16-24 week old seedlings and 2 year old trees.

The protein resides in the plastid. The protein localises to the amyloplast. Its subcellular location is the nucleus. In terms of biological role, starch granule-associated phosphoglucan phosphatase involved in the control of starch accumulation. Acts as a major regulator of the initial steps of starch degradation at the granule surface. Functions during the day by dephosphorylating the night-accumulated phospho-oligosaccharides. Can release phosphate from both the C6 and the C3 positions. The protein is Phosphoglucan phosphatase DSP4, amyloplastic of Castanea sativa (Sweet chestnut).